The chain runs to 338 residues: 5-dehydro-2-deoxygluconokinase (338 aa).

The protein belongs to the carbohydrate kinase PfkB family.

The enzyme catalyses 5-dehydro-2-deoxy-D-gluconate + ATP = 6-phospho-5-dehydro-2-deoxy-D-gluconate + ADP + H(+). It participates in polyol metabolism; myo-inositol degradation into acetyl-CoA; acetyl-CoA from myo-inositol: step 5/7. In terms of biological role, catalyzes the phosphorylation of 5-dehydro-2-deoxy-D-gluconate (2-deoxy-5-keto-D-gluconate or DKG) to 6-phospho-5-dehydro-2-deoxy-D-gluconate (DKGP). This chain is 5-dehydro-2-deoxygluconokinase, found in Clostridium perfringens (strain ATCC 13124 / DSM 756 / JCM 1290 / NCIMB 6125 / NCTC 8237 / Type A).